Consider the following 392-residue polypeptide: MKKVILVRYGEILLKGLNRPIFEDKLMSNIKRAIHKLGKVRITKSQARIYIEPLEENYDFDEALKLLSKVFGIVSVSPVWKIDSDFECIKENSVKMVKDLINREGYKTFKVETKRGNKRFPMDSPEISRQLGGYILRNVPELSVDVKNPDFILYVEVREFTYIYSEIIQAVCGMPLGSNGKAVLLLSGGIDSPVAGWMIAKRGVEIEAVHFYSYPYTSERAKEKVIELTKILATYCQKINLHIVPFTEIQLEINEKCPHEELTIIMRRAMMRIAEIIANKTGALALVTGESVGQVASQTIQSLVVTNAVVSLPVFRPLIGMDKNEVVDIAKKIGTFETSILPYEDCCTVFVAKHPTTKPKLERIQLSESRLNMEELINKAVENTEVLTITRD.

The region spanning 61–168 (DEALKLLSKV…EFTYIYSEII (108 aa)) is the THUMP domain. ATP contacts are provided by residues 185–186 (LL), 210–211 (HF), Arg-267, Gly-289, and Gln-298.

It belongs to the ThiI family.

It localises to the cytoplasm. It catalyses the reaction [ThiI sulfur-carrier protein]-S-sulfanyl-L-cysteine + a uridine in tRNA + 2 reduced [2Fe-2S]-[ferredoxin] + ATP + H(+) = [ThiI sulfur-carrier protein]-L-cysteine + a 4-thiouridine in tRNA + 2 oxidized [2Fe-2S]-[ferredoxin] + AMP + diphosphate. The enzyme catalyses [ThiS sulfur-carrier protein]-C-terminal Gly-Gly-AMP + S-sulfanyl-L-cysteinyl-[cysteine desulfurase] + AH2 = [ThiS sulfur-carrier protein]-C-terminal-Gly-aminoethanethioate + L-cysteinyl-[cysteine desulfurase] + A + AMP + 2 H(+). It participates in cofactor biosynthesis; thiamine diphosphate biosynthesis. Its function is as follows. Catalyzes the ATP-dependent transfer of a sulfur to tRNA to produce 4-thiouridine in position 8 of tRNAs, which functions as a near-UV photosensor. Also catalyzes the transfer of sulfur to the sulfur carrier protein ThiS, forming ThiS-thiocarboxylate. This is a step in the synthesis of thiazole, in the thiamine biosynthesis pathway. The sulfur is donated as persulfide by IscS. This is Probable tRNA sulfurtransferase from Acetivibrio thermocellus (strain ATCC 27405 / DSM 1237 / JCM 9322 / NBRC 103400 / NCIMB 10682 / NRRL B-4536 / VPI 7372) (Clostridium thermocellum).